The chain runs to 129 residues: MSNIPAELRYAQSHEWARLEADGSVTVGISDHAQEALGDVVFIELPELGKTLAAGQEAGVVESVKAASDIYSPIGGEVIAINEALADTPEDVNNDPYVSWFFKLKPSNPAELDKLLDAAGYQAAVDAEG.

One can recognise a Lipoyl-binding domain in the interval 24 to 105 (SVTVGISDHA…PYVSWFFKLK (82 aa)). Lys65 bears the N6-lipoyllysine mark.

It belongs to the GcvH family. The glycine cleavage system is composed of four proteins: P, T, L and H. Requires (R)-lipoate as cofactor.

Its function is as follows. The glycine cleavage system catalyzes the degradation of glycine. The H protein shuttles the methylamine group of glycine from the P protein to the T protein. The protein is Glycine cleavage system H protein 2 of Pseudomonas aeruginosa (strain ATCC 15692 / DSM 22644 / CIP 104116 / JCM 14847 / LMG 12228 / 1C / PRS 101 / PAO1).